The primary structure comprises 62 residues: MTIAFQLAVFALIATSSILLISVPVVFASPDGWSSNKNVVFSGTSLWIGLVFLVGILNSLIS.

Transmembrane regions (helical) follow at residues 8 to 28 and 41 to 61; these read AVFA…VVFA and FSGT…NSLI.

The protein belongs to the PsbZ family. PSII is composed of 1 copy each of membrane proteins PsbA, PsbB, PsbC, PsbD, PsbE, PsbF, PsbH, PsbI, PsbJ, PsbK, PsbL, PsbM, PsbT, PsbY, PsbZ, Psb30/Ycf12, at least 3 peripheral proteins of the oxygen-evolving complex and a large number of cofactors. It forms dimeric complexes.

It is found in the plastid. The protein localises to the chloroplast thylakoid membrane. In terms of biological role, may control the interaction of photosystem II (PSII) cores with the light-harvesting antenna, regulates electron flow through the 2 photosystem reaction centers. PSII is a light-driven water plastoquinone oxidoreductase, using light energy to abstract electrons from H(2)O, generating a proton gradient subsequently used for ATP formation. The chain is Photosystem II reaction center protein Z from Citrus sinensis (Sweet orange).